We begin with the raw amino-acid sequence, 228 residues long: Small ribosomal subunit protein uS3 (228 aa).

The 69-residue stretch at 39–107 (TREYLQDKLK…PVHINIEEIR (69 aa)) folds into the KH type-2 domain.

This sequence belongs to the universal ribosomal protein uS3 family. Part of the 30S ribosomal subunit. Forms a tight complex with proteins S10 and S14.

Binds the lower part of the 30S subunit head. Binds mRNA in the 70S ribosome, positioning it for translation. The protein is Small ribosomal subunit protein uS3 of Pseudomonas entomophila (strain L48).